A 180-amino-acid polypeptide reads, in one-letter code: tRNA (cytidine(56)-2'-O)-methyltransferase (180 aa).

Residues leucine 82, 112–116, and 130–137 each bind S-adenosyl-L-methionine; these read GAEKV and VGNQPHSE.

It belongs to the aTrm56 family. As to quaternary structure, homodimer.

The protein localises to the cytoplasm. It catalyses the reaction cytidine(56) in tRNA + S-adenosyl-L-methionine = 2'-O-methylcytidine(56) in tRNA + S-adenosyl-L-homocysteine + H(+). Functionally, specifically catalyzes the AdoMet-dependent 2'-O-ribose methylation of cytidine at position 56 in tRNAs. The protein is tRNA (cytidine(56)-2'-O)-methyltransferase of Methanococcus vannielii (strain ATCC 35089 / DSM 1224 / JCM 13029 / OCM 148 / SB).